The following is a 315-amino-acid chain: MSSTRIPVAIIGSGNIGTDLMIKILRCSDTLEVGAMVGIDPASDGLARAERLGVPTTAGGIDGLLALPNFKEIRIAFDATSAGAHKVHDSKLRAHGVRIIDLTPAAVGPYVVPVVNFAEHAHEPNLNMVTCGGQATIPIVHAVAGVAPVHYAEIVAAISSKSAGPGTRANIDEFTETTSRAIVEVGGAARGKAIIVLNPAEPPLIMRDTVYCFVPLDADTQAIVDAVEQRVAEVNRYVPGYRLKQHVQFEHFTENNRQNIPGLGWSTGIKVAVYLEVEGAGHYLPAYAGNLDIMTSAALTVAERIAQAQFTDQGL.

13–16 lines the NAD(+) pocket; the sequence is SGNI. Cysteine 131 serves as the catalytic Acyl-thioester intermediate. Residues 162–170 and asparagine 290 each bind NAD(+); that span reads SAGPGTRAN.

It belongs to the acetaldehyde dehydrogenase family.

The catalysed reaction is acetaldehyde + NAD(+) + CoA = acetyl-CoA + NADH + H(+). In Pseudomonas putida (strain W619), this protein is Acetaldehyde dehydrogenase 2.